The following is a 763-amino-acid chain: MAP7 domain-containing protein 2 (763 aa).

Over residues 1–11 (MERSGGNGAGA) the composition is skewed to gly residues. 3 disordered regions span residues 1–72 (MERS…REKC), 102–127 (LEEQ…LREE), and 140–531 (ERTQ…KAMI). Residues 12–31 (RAGAPSEGAAKGSSLLSAKS) show a composition bias toward low complexity. Residues 53-72 (LKSDERQRLAKERREEREKC) show a composition bias toward basic and acidic residues. Polar residues-rich tracts occupy residues 184–212 (PSDT…NLPK) and 241–251 (LKSSYKSSPTR). Over residues 312 to 321 (KRSSSPVKSK) the composition is skewed to low complexity. 3 stretches are compositionally biased toward basic and acidic residues: residues 354-372 (ETLK…KEGA), 381-420 (PREE…EHSA), and 437-531 (LAEK…KAMI). Residues 434 to 575 (AKILAEKRRQ…QERLERKKRI (142 aa)) adopt a coiled-coil conformation.

Belongs to the MAP7 family. In terms of assembly, interacts (via N-terminus) with microtubules; facilitates microtubule stabilization. Interacts with kinesin-1 family members, KIF5A, KIF5B and KIF5C. In terms of tissue distribution, detected only in the brain and testis (at the protein level).

The protein localises to the cytoplasm. It localises to the cytoskeleton. The protein resides in the microtubule organizing center. Its subcellular location is the centrosome. It is found in the cell projection. The protein localises to the axon. Microtubule-stabilizing protein involved in the control of cell motility and neurite outgrowth. Acts as a critical cofactor for kinesin transport; in the proximal axon regulates kinesin-1 family members, KIF5A, KIF5B and KIF5C recruitment to microtubules and contributes to kinesin-1-mediated transport in the axons. The chain is MAP7 domain-containing protein 2 (Map7d2) from Rattus norvegicus (Rat).